A 323-amino-acid polypeptide reads, in one-letter code: Serpentine receptor class gamma-5 (323 aa).

Transmembrane regions (helical) follow at residues 31 to 51 (QLFY…IMLF), 63 to 83 (FIIF…DLFI), 98 to 117 (YPLF…IYNY), 151 to 171 (IPVT…NVII), 193 to 213 (WASL…ITVF), 245 to 265 (AAFF…ITAA), and 272 to 292 (FLQG…MVLI).

It belongs to the nematode receptor-like protein srg family.

It localises to the membrane. This is Serpentine receptor class gamma-5 (srg-5) from Caenorhabditis elegans.